Reading from the N-terminus, the 168-residue chain is MSEKALTLKQSGVRWLWLAILVFIADIGIKLVVMDNMGYGWANRIEVLPFFNLLYVHNYGAAFSFLSDQAGWQRWLFTGIAFVVTGLLTYWMSKLPAKEKWNNIAYALIIGGAVGNVFDRVVHGFVVDYLDFFWGSYHWPAFNLADTTICIGAAMIILDGFRKKDANK.

The next 4 membrane-spanning stretches (helical) occupy residues W15–D35, V47–S67, W75–L95, and A107–V127. Catalysis depends on residues D128 and D146. A helical membrane pass occupies residues A141–F161.

The protein belongs to the peptidase A8 family.

The protein localises to the cell inner membrane. It carries out the reaction Release of signal peptides from bacterial membrane prolipoproteins. Hydrolyzes -Xaa-Yaa-Zaa-|-(S,diacylglyceryl)Cys-, in which Xaa is hydrophobic (preferably Leu), and Yaa (Ala or Ser) and Zaa (Gly or Ala) have small, neutral side chains.. The protein operates within protein modification; lipoprotein biosynthesis (signal peptide cleavage). Its function is as follows. This protein specifically catalyzes the removal of signal peptides from prolipoproteins. This chain is Lipoprotein signal peptidase, found in Vibrio campbellii (strain ATCC BAA-1116).